A 1076-amino-acid polypeptide reads, in one-letter code: DNA-directed RNA polymerase subunit beta (1076 aa).

The protein belongs to the RNA polymerase beta chain family. In plastids the minimal PEP RNA polymerase catalytic core is composed of four subunits: alpha, beta, beta', and beta''. When a (nuclear-encoded) sigma factor is associated with the core the holoenzyme is formed, which can initiate transcription.

The protein resides in the plastid. The protein localises to the chloroplast. The enzyme catalyses RNA(n) + a ribonucleoside 5'-triphosphate = RNA(n+1) + diphosphate. Functionally, DNA-dependent RNA polymerase catalyzes the transcription of DNA into RNA using the four ribonucleoside triphosphates as substrates. This Triticum aestivum (Wheat) protein is DNA-directed RNA polymerase subunit beta.